Reading from the N-terminus, the 374-residue chain is uncharacterized protein (374 aa).

A signal peptide spans 1–26 (MNNLIKAYAAGVMSAAFLFGSEGRVR).

This is an uncharacterized protein from Treponema pallidum (strain Nichols).